The primary structure comprises 188 residues: Casparian strip membrane protein 1 (188 aa).

At 1–24 (MKAGALELGHASKTTKSGVNRGMS) the chain is on the cytoplasmic side. Residues 25–45 (ILDLFIRIIAIIATLGSAIAM) form a helical membrane-spanning segment. Residues 46-72 (GTTNETLPFFTQFVRFKAKYSDLPTFT) lie on the Extracellular side of the membrane. Residue N49 is glycosylated (N-linked (GlcNAc...) asparagine). A helical membrane pass occupies residues 73 to 93 (FFVVANAIVSAYLVLSLGLSI). Topologically, residues 94–105 (YHIMRSRAQATR) are cytoplasmic. Residues 106 to 126 (IALIFFDAAMLGLLTGGASAS) traverse the membrane as a helical segment. At 127–159 (AAIVYLAHKGNRKTNWFPICQQYDSFCHRTSGS) the chain is on the extracellular side. The helical transmembrane segment at 160-180 (LVGSFAGSVLIILLIFLSAIA) threads the bilayer. At 181–188 (LSRQSLNH) the chain is on the cytoplasmic side.

Belongs to the Casparian strip membrane proteins (CASP) family. In terms of assembly, homodimer and heterodimers.

The protein resides in the cell membrane. Regulates membrane-cell wall junctions and localized cell wall deposition. Required for establishment of the Casparian strip membrane domain (CSD) and the subsequent formation of Casparian strips, a cell wall modification of the root endodermis that determines an apoplastic barrier between the intraorganismal apoplasm and the extraorganismal apoplasm and prevents lateral diffusion. The protein is Casparian strip membrane protein 1 of Solanum tuberosum (Potato).